Reading from the N-terminus, the 219-residue chain is Cytidylate kinase (219 aa).

Residue 21–29 (GPAASGKGT) participates in ATP binding.

It belongs to the cytidylate kinase family. Type 1 subfamily.

Its subcellular location is the cytoplasm. It catalyses the reaction CMP + ATP = CDP + ADP. The catalysed reaction is dCMP + ATP = dCDP + ADP. The sequence is that of Cytidylate kinase from Rickettsia conorii (strain ATCC VR-613 / Malish 7).